The primary structure comprises 120 residues: Ribonuclease P protein component (120 aa).

Belongs to the RnpA family. As to quaternary structure, consists of a catalytic RNA component (M1 or rnpB) and a protein subunit.

The catalysed reaction is Endonucleolytic cleavage of RNA, removing 5'-extranucleotides from tRNA precursor.. In terms of biological role, RNaseP catalyzes the removal of the 5'-leader sequence from pre-tRNA to produce the mature 5'-terminus. It can also cleave other RNA substrates such as 4.5S RNA. The protein component plays an auxiliary but essential role in vivo by binding to the 5'-leader sequence and broadening the substrate specificity of the ribozyme. In Dehalococcoides mccartyi (strain CBDB1), this protein is Ribonuclease P protein component.